Consider the following 346-residue polypeptide: Low-temperature-induced cysteine proteinase (346 aa).

A propeptide spans 1–17 (activation peptide); it reads KLSKNKSDRYLPKVGDS. Cystine bridges form between Cys39–Cys81, Cys73–Cys114, Cys172–Cys223, Cys256–Cys268, and Cys262–Cys283. The active site involves Cys42. Residues His178 and Asn198 contribute to the active site. Asn215 carries an N-linked (GlcNAc...) asparagine glycan. The propeptide at 238–346 is removed in mature form; it reads NPPKPAPSPP…FGNGGKKSSS (109 aa).

This sequence belongs to the peptidase C1 family.

The polypeptide is Low-temperature-induced cysteine proteinase (Solanum lycopersicum (Tomato)).